A 342-amino-acid chain; its full sequence is Global transcription regulator FGP1 (342 aa).

The interval Phe-91–Tyr-113 is disordered.

This sequence belongs to the MIT1/WOR1 family.

It is found in the nucleus. In terms of biological role, global transcriptional regulator of pathogenicity. Regulates many genes during growth in putrescine medium and during infection. Involved in the developmental processes of conidium formation and sexual reproduction and modulates a morphological change that accompanies mycotoxin production. The sequence is that of Global transcription regulator FGP1 from Gibberella zeae (strain ATCC MYA-4620 / CBS 123657 / FGSC 9075 / NRRL 31084 / PH-1) (Wheat head blight fungus).